The chain runs to 1314 residues: Ubinuclein-2 (1314 aa).

Residues 1–113 (MAEPRRVAFI…PPPRPPKETV (113 aa)) are disordered. Residue S13 is modified to Phosphoserine. Composition is skewed to basic and acidic residues over residues 16-31 (RRREADFAGAEREPPR) and 55-67 (ARDKPLPQREVSR). Pro residues predominate over residues 81 to 96 (PEPPPPPLPLQTPPPR). Position 229 is a phosphothreonine (T229). S236 is modified (phosphoserine). Residues 236–288 (SDTEEDDFTDNQKHKPPKVPKIKEDDIEVKKRKRKEEGEKEKKPRKKVPKQLG) form a disordered region. T238 is modified (phosphothreonine). K258 participates in a covalent cross-link: Glycyl lysine isopeptide (Lys-Gly) (interchain with G-Cter in SUMO2). S297 bears the Phosphoserine mark. 9 disordered regions span residues 322–345 (DALKKESTPKVPVTPSSSSLPKPP), 400–424 (ATSDGSPLSESGGENGNTTHPTFPS), 559–584 (LQADEEREKNGSDDDDDEKPGKRVIG), 657–709 (LTSA…ASAS), 785–818 (ATPKKLDSTQTAHSSSLIAGHTGPVPKKPQDLAH), 849–893 (GLQR…SLTQ), 948–975 (YRLPLSTPSPGNGSQGPHPLVSRTAPST), 1003–1185 (ASPK…GSSV), and 1288–1314 (PLPAHLQQAFNDGGQSKGDTKLPRKPQ). The segment covering 330 to 341 (PKVPVTPSSSSL) has biased composition (low complexity). Phosphoserine occurs at positions 402, 405, and 408. Residues 415 to 424 (GNTTHPTFPS) are compositionally biased toward polar residues. Basic and acidic residues-rich tracts occupy residues 560–570 (QADEEREKNGS) and 673–684 (KVKECSPKKDPK). S570 carries the phosphoserine modification. Low complexity predominate over residues 685-709 (APASVVASGGGPSTSSSTSIVASAS). Over residues 792–801 (STQTAHSSSL) the composition is skewed to polar residues. Residues 849–879 (GLQRSSQIHASSSSQTHVSSSQAQAAASSHA) are compositionally biased toward low complexity. Positions 883 to 893 (SEAQDASSLTQ) are enriched in polar residues. Residues 1003–1013 (ASPKLAASPKP) are compositionally biased toward low complexity. Over residues 1014–1028 (ATSPKPLPSPKPSVS) the composition is skewed to pro residues. A compositionally biased stretch (low complexity) spans 1029-1040 (PKPSLSAKPSIS). Position 1036 is an N6-acetyllysine (K1036). 2 stretches are compositionally biased toward polar residues: residues 1057 to 1132 (PSSS…NSLS) and 1142 to 1153 (RGSNLNSSGANR). S1091 is subject to Phosphoserine. K1116 bears the N6-acetyllysine mark. Residues 1305-1314 (GDTKLPRKPQ) show a composition bias toward basic and acidic residues.

The protein belongs to the ubinuclein family.

This Mus musculus (Mouse) protein is Ubinuclein-2 (Ubn2).